We begin with the raw amino-acid sequence, 430 residues long: Divergent protein kinase domain 2A (430 aa).

Residues 1 to 35 form the signal peptide; that stretch reads MWRLVPPKLGRLSRSLKLAALGSLLVLMVLHSPSL.

Belongs to the DIPK family.

The protein resides in the cytoplasmic vesicle. It localises to the COPI-coated vesicle. It is found in the golgi apparatus. The protein localises to the secreted. In terms of biological role, may play a role in cardiomyocyte proliferation through paracrine signaling and activation of the PPI3K-AKT-CDK7 signaling cascade. The protein is Divergent protein kinase domain 2A of Homo sapiens (Human).